The chain runs to 441 residues: Serine--tRNA ligase (441 aa).

250–252 (TSE) lines the L-serine pocket. Residues 281 to 283 (RRE) and V297 each bind ATP. E304 contributes to the L-serine binding site. An ATP-binding site is contributed by 368-371 (EIVS). T402 contributes to the L-serine binding site.

Belongs to the class-II aminoacyl-tRNA synthetase family. Type-1 seryl-tRNA synthetase subfamily. In terms of assembly, homodimer. The tRNA molecule binds across the dimer.

The protein localises to the cytoplasm. It carries out the reaction tRNA(Ser) + L-serine + ATP = L-seryl-tRNA(Ser) + AMP + diphosphate + H(+). The enzyme catalyses tRNA(Sec) + L-serine + ATP = L-seryl-tRNA(Sec) + AMP + diphosphate + H(+). It participates in aminoacyl-tRNA biosynthesis; selenocysteinyl-tRNA(Sec) biosynthesis; L-seryl-tRNA(Sec) from L-serine and tRNA(Sec): step 1/1. Functionally, catalyzes the attachment of serine to tRNA(Ser). Is also able to aminoacylate tRNA(Sec) with serine, to form the misacylated tRNA L-seryl-tRNA(Sec), which will be further converted into selenocysteinyl-tRNA(Sec). The protein is Serine--tRNA ligase of Thermoplasma volcanium (strain ATCC 51530 / DSM 4299 / JCM 9571 / NBRC 15438 / GSS1).